Reading from the N-terminus, the 321-residue chain is Glycolipid transfer protein domain-containing protein 2 (321 aa).

The protein belongs to the GLTP family.

This is Glycolipid transfer protein domain-containing protein 2 (Gltpd2) from Mus musculus (Mouse).